We begin with the raw amino-acid sequence, 443 residues long: D(2) dopamine receptor (443 aa).

Over 1–37 (MDPLNLSWYDDDPESRNWSRPFNGSEGKVGKPHYNYY) the chain is Extracellular. Residues asparagine 5, asparagine 17, and asparagine 23 are each glycosylated (N-linked (GlcNAc...) asparagine). A helical transmembrane segment spans residues 38-60 (AMLLTLLIFVIVFGNVLVCMAVS). Residues 61-70 (REKALQTTTN) lie on the Cytoplasmic side of the membrane. The helical transmembrane segment at 71–93 (YLIVSLAVADLLVATLVMPWVVY) threads the bilayer. Topologically, residues 94-108 (LEVVGEWKFSRIHCD) are extracellular. The cysteines at positions 107 and 182 are disulfide-linked. The chain crosses the membrane as a helical span at residues 109–130 (IFVTLDVMMCTASILNLCAISI). Residues 131–151 (DRYTAVAMPMLYNTRYSSKRR) lie on the Cytoplasmic side of the membrane. The helical transmembrane segment at 152–172 (VTVMIAIVWVLSFTISCPLLF) threads the bilayer. Residues 173–188 (GLNNTDQNECIIANPA) lie on the Extracellular side of the membrane. Residues 189–213 (FVVYSSVVSFYVPFIVTLLVYIKIY) traverse the membrane as a helical segment. The tract at residues 211–373 (KIYIVLRRRR…SQQKEKKATQ (163 aa)) is interaction with PPP1R9B. At 214-373 (IVLRRRRKRV…SQQKEKKATQ (160 aa)) the chain is on the cytoplasmic side. Residues 282–331 (EMLSSTSPPERTRYSPIPPSHHQLTLPDPSHHGLHSTANSPVKPEKNGHA) form a disordered region. A helical membrane pass occupies residues 374–395 (MLAIVLGVFIICWLPFFITHIL). Residues 396–409 (NIHCDCNIPPVLYS) lie on the Extracellular side of the membrane. Cysteine 399 and cysteine 401 form a disulfide bridge. Residues 410–431 (AFTWLGYVNSAVNPIIYTTFNV) traverse the membrane as a helical segment. At 432 to 443 (EFRKAFMKILHC) the chain is on the cytoplasmic side. The S-palmitoyl cysteine moiety is linked to residue cysteine 443.

It belongs to the G-protein coupled receptor 1 family. Forms homo- and heterooligomers with DRD4. The interaction with DRD4 may modulate agonist-induced downstream signaling. Interacts with CADPS and CADPS2. Interacts with GPRASP1, PPP1R9B and CLIC6. Interacts with ARRB2. Interacts with HTR2A. Interacts with DRD1. Interacts with KCNA2. In terms of processing, palmitoylated. Palmitoylation which is required for proper localization to the plasma membrane and stability of the receptor could be carried on by ZDHHC4, ZDHHC3 and ZDHHC8.

Its subcellular location is the cell membrane. It localises to the golgi apparatus membrane. In terms of biological role, dopamine receptor whose activity is mediated by G proteins which inhibit adenylyl cyclase. Positively regulates postnatal regression of retinal hyaloid vessels via suppression of VEGFR2/KDR activity, downstream of OPN5. The sequence is that of D(2) dopamine receptor (DRD2) from Mustela putorius furo (European domestic ferret).